The primary structure comprises 622 residues: Intermediate filament protein ifc-2 (622 aa).

Residues 19-54 (SGTYASGFGQLVSGMSSAGAICTTQIRDAREREKRE) form a head region. Positions 51-399 (EKREIGLLND…ILLNGANVTT (349 aa)) constitute an IF rod domain. The coil 1A stretch occupies residues 55–86 (IGLLNDRLADYIEKVRFLEAQNRCLSHDIDIL). The interval 87-99 (RNGFSGGGHVSGL) is linker 1. The coil 1B stretch occupies residues 100 to 237 (FDAEINQAKH…TENNVRIEQE (138 aa)). The segment at 238–255 (LVFIRRDTTADNRDYFRH) is linker 12. The tract at residues 256-399 (ELQAAIRDIR…ILLNGANVTT (144 aa)) is coil 2. The interval 400-550 (YTSNTHGSGS…RVDVGGFRIE (151 aa)) is tail. The LTD domain occupies 509 to 622 (SGRHFHSWYL…EERAWFVYLD (114 aa)).

Belongs to the intermediate filament family. In terms of tissue distribution, expressed in intestinal cells and at desmosomes in intestine and pharynx of the larva.

The protein localises to the cytoplasm. Functionally, cytoplasmic intermediate filaments provide mechanical strength to cells. Not essential protein, although its absence leads to mild defects in locomotion. The sequence is that of Intermediate filament protein ifc-2 (ifc-2) from Caenorhabditis elegans.